The chain runs to 122 residues: Small ribosomal subunit protein uS13 (122 aa).

The segment at 98 to 122 is disordered; the sequence is VRGQKTKSNARTRKGPRPSRIKKKK. Basic residues predominate over residues 101–122; the sequence is QKTKSNARTRKGPRPSRIKKKK.

The protein belongs to the universal ribosomal protein uS13 family. In terms of assembly, part of the 30S ribosomal subunit. Forms a loose heterodimer with protein S19. Forms two bridges to the 50S subunit in the 70S ribosome.

Functionally, located at the top of the head of the 30S subunit, it contacts several helices of the 16S rRNA. In the 70S ribosome it contacts the 23S rRNA (bridge B1a) and protein L5 of the 50S subunit (bridge B1b), connecting the 2 subunits; these bridges are implicated in subunit movement. Contacts the tRNAs in the A and P-sites. The protein is Small ribosomal subunit protein uS13 of Thermosipho africanus (strain TCF52B).